We begin with the raw amino-acid sequence, 230 residues long: Ribosomal RNA large subunit methyltransferase E (230 aa).

S-adenosyl-L-methionine-binding residues include glycine 82, tryptophan 84, aspartate 100, aspartate 116, and aspartate 140. The active-site Proton acceptor is lysine 180.

Belongs to the class I-like SAM-binding methyltransferase superfamily. RNA methyltransferase RlmE family.

Its subcellular location is the cytoplasm. The enzyme catalyses uridine(2552) in 23S rRNA + S-adenosyl-L-methionine = 2'-O-methyluridine(2552) in 23S rRNA + S-adenosyl-L-homocysteine + H(+). Its function is as follows. Specifically methylates the uridine in position 2552 of 23S rRNA at the 2'-O position of the ribose in the fully assembled 50S ribosomal subunit. This is Ribosomal RNA large subunit methyltransferase E from Granulibacter bethesdensis (strain ATCC BAA-1260 / CGDNIH1).